Reading from the N-terminus, the 350-residue chain is Serine-threonine kinase receptor-associated protein (350 aa).

WD repeat units follow at residues 12-56 (GHTR…GTFL), 57-96 (GHKG…ELMT), 98-137 (AHKH…AEPK), 141-179 (GHTS…EVKS), 180-212 (LNFN…HSAV), 221-262 (EAPA…ESYK), and 263-302 (GHFG…TYGL). Residues Ser312, Ser335, and Ser338 each carry the phosphoserine modification.

This sequence belongs to the WD repeat STRAP family. As to quaternary structure, part of the core SMN complex that contains SMN1, GEMIN2/SIP1, DDX20/GEMIN3, GEMIN4, GEMIN5, GEMIN6, GEMIN7, GEMIN8 and STRAP/UNRIP. Part of the SMN-Sm complex that contains SMN1, GEMIN2/SIP1, DDX20/GEMIN3, GEMIN4, GEMIN5, GEMIN6, GEMIN7, GEMIN8, STRAP/UNRIP and the Sm proteins SNRPB, SNRPD1, SNRPD2, SNRPD3, SNRPE, SNRPF and SNRPG. Associates with the SMN complex in the cytoplasm but not in the nucleus. Interacts with GEMIN6; the interaction is direct. Interacts with GEMIN7; the interaction is direct. Interacts with CSDE1/UNR and MAWBP. Interacts with PDPK1. Interacts with TRIM48.

The protein resides in the cytoplasm. The protein localises to the nucleus. The SMN complex catalyzes the assembly of small nuclear ribonucleoproteins (snRNPs), the building blocks of the spliceosome, and thereby plays an important role in the splicing of cellular pre-mRNAs. Most spliceosomal snRNPs contain a common set of Sm proteins SNRPB, SNRPD1, SNRPD2, SNRPD3, SNRPE, SNRPF and SNRPG that assemble in a heptameric protein ring on the Sm site of the small nuclear RNA to form the core snRNP (Sm core). In the cytosol, the Sm proteins SNRPD1, SNRPD2, SNRPE, SNRPF and SNRPG are trapped in an inactive 6S pICln-Sm complex by the chaperone CLNS1A that controls the assembly of the core snRNP. To assemble core snRNPs, the SMN complex accepts the trapped 5Sm proteins from CLNS1A forming an intermediate. Binding of snRNA inside 5Sm triggers eviction of the SMN complex, thereby allowing binding of SNRPD3 and SNRPB to complete assembly of the core snRNP. STRAP plays a role in the cellular distribution of the SMN complex. Negatively regulates TGF-beta signaling but positively regulates the PDPK1 kinase activity by enhancing its autophosphorylation and by significantly reducing the association of PDPK1 with 14-3-3 protein. In Homo sapiens (Human), this protein is Serine-threonine kinase receptor-associated protein (STRAP).